Here is a 208-residue protein sequence, read N- to C-terminus: dITP/XTP pyrophosphatase (208 aa).

16–21 (TGNAGK) is a binding site for substrate. Mg(2+)-binding residues include Glu46 and Asp75. Asp75 functions as the Proton acceptor in the catalytic mechanism. Residues Ser76, 155–158 (FGYD), Lys178, and 183–184 (HR) each bind substrate.

Belongs to the HAM1 NTPase family. Homodimer. Requires Mg(2+) as cofactor.

It catalyses the reaction XTP + H2O = XMP + diphosphate + H(+). The catalysed reaction is dITP + H2O = dIMP + diphosphate + H(+). The enzyme catalyses ITP + H2O = IMP + diphosphate + H(+). Functionally, pyrophosphatase that catalyzes the hydrolysis of nucleoside triphosphates to their monophosphate derivatives, with a high preference for the non-canonical purine nucleotides XTP (xanthosine triphosphate), dITP (deoxyinosine triphosphate) and ITP. Seems to function as a house-cleaning enzyme that removes non-canonical purine nucleotides from the nucleotide pool, thus preventing their incorporation into DNA/RNA and avoiding chromosomal lesions. In Deinococcus deserti (strain DSM 17065 / CIP 109153 / LMG 22923 / VCD115), this protein is dITP/XTP pyrophosphatase.